The sequence spans 430 residues: Enolase (430 aa).

Glutamine 167 lines the (2R)-2-phosphoglycerate pocket. The Proton donor role is filled by glutamate 209. Mg(2+) contacts are provided by aspartate 245, glutamate 286, and aspartate 313. 4 residues coordinate (2R)-2-phosphoglycerate: lysine 338, arginine 367, serine 368, and lysine 389. Lysine 338 functions as the Proton acceptor in the catalytic mechanism.

It belongs to the enolase family. The cofactor is Mg(2+).

Its subcellular location is the cytoplasm. It localises to the secreted. The protein localises to the cell surface. It catalyses the reaction (2R)-2-phosphoglycerate = phosphoenolpyruvate + H2O. Its pathway is carbohydrate degradation; glycolysis; pyruvate from D-glyceraldehyde 3-phosphate: step 4/5. Functionally, catalyzes the reversible conversion of 2-phosphoglycerate (2-PG) into phosphoenolpyruvate (PEP). It is essential for the degradation of carbohydrates via glycolysis. The polypeptide is Enolase (Synechococcus sp. (strain CC9902)).